Reading from the N-terminus, the 337-residue chain is MQISLKKYTLELKHTFSISRESHDFQDTLIAGLTLNGKTGYGEATSNPYYKITAESMIKEIEGIKNEIESFEFTTPESFHSFLEEKELSNFAICALDLAAHDLYGKLLGKPLYEIWGTNNDQYPTTNYTIGIAELDTMVAKMKEKPWPIYKIKLGTDNDVAIIRELRKHTTATFRIDANCAWSAEETIANAPQLKELGVEFLEQPLQADDWAGMEKVMHQCVLPVIADESCIVESDVEKCGLHFNGINIKLTKCGGLTPALRMIKKAKLMGLKVMVGCMTESSVGISAIAQLLPQLDYVDMDGAILLKRDIANGVRIGEDGSVVFPTLGGSGVTLNQ.

Residues threonine 129 and 151 to 153 contribute to the substrate site; that span reads KIK. Aspartate 177, glutamate 203, and aspartate 228 together coordinate Mg(2+). Substrate-binding positions include lysine 250 and 300-302; that span reads DMD.

This sequence belongs to the mandelate racemase/muconate lactonizing enzyme family. The cofactor is Mg(2+).

Functionally, broad specificity dipeptide epimerase. Catalyzes the epimerization of L-Ala-L-Ala, L-Ala-L-Glu, L-Ala-L-Ser, L-Ala-L-Thr and L-Ala-L-Met (in vitro). The chain is L-Ala-D/L-amino acid epimerase from Maribacter sp. (strain HTCC2170 / KCCM 42371).